The primary structure comprises 911 residues: Facilitated trehalose transporter Tret1 (911 aa).

The segment at 1–256 (MSGRDNRGAG…RIGFQQQKAT (256 aa)) is disordered. The Cytoplasmic segment spans residues 1–446 (MSGRDNRGAG…VYRPTTNPIY (446 aa)). Residues 8-19 (GAGGGGGGGGGG) show a composition bias toward gly residues. Basic and acidic residues predominate over residues 32–50 (KLKEKLTRAGEELGYHRVE). 3 stretches are compositionally biased toward low complexity: residues 51–64 (SNLSTSNTGTSLDT), 76–129 (AAPQ…QQLR), and 156–166 (QQIHVQQQQQQ). Serine 302, serine 303, and serine 304 each carry phosphoserine. The segment at 334–355 (VLQGSSTDSDEEGDDAEHKRLI) is disordered. Phosphoserine is present on residues serine 374 and serine 376. The tract at residues 380–402 (FLTSRQNFQQQRSISTDSRKSRR) is disordered. Polar residues predominate over residues 384 to 395 (RQNFQQQRSIST). A helical membrane pass occupies residues 447–467 (IWTQVLAALSVSLGSLVVGFA). The Extracellular segment spans residues 468 to 494 (SAYTSPALVSMTNTNLTSFVVTPQAAS). A glycan (N-linked (GlcNAc...) asparagine) is linked at asparagine 482. The chain crosses the membrane as a helical span at residues 495–515 (WVGGIMPLAGLAGGIAGGPFI). Residues 516–527 (EYLGRRNTILAT) lie on the Cytoplasmic side of the membrane. Residues 528–548 (AVPFIVSWLLIACAVNVIMVL) form a helical membrane-spanning segment. Over 549–551 (CGR) the chain is Extracellular. Residues 552–572 (FLAGFCVGIASLSLPVYLGET) traverse the membrane as a helical segment. Residues 573 to 578 (VQPEVR) are Cytoplasmic-facing. Residues 579–599 (GTLGLLPTAFGNIGILLCFVA) traverse the membrane as a helical segment. Residues 600 to 606 (GTYMDWS) lie on the Extracellular side of the membrane. A helical membrane pass occupies residues 607–627 (MLAFLGASLPVPFLILMFLIP). The Cytoplasmic segment spans residues 628 to 690 (ETPRWYVSRG…ELLKRSNLKP (63 aa)). The helical transmembrane segment at 691 to 711 (LSISLGLMFFQQLSGINAVIF) threads the bilayer. The Extracellular portion of the chain corresponds to 712-727 (YTVQIFQDAGSTIDGN). A helical transmembrane segment spans residues 728–748 (VCTIIVGVVNFAATFIATILI). Residues 749–754 (DRAGRK) lie on the Cytoplasmic side of the membrane. Residues 755-775 (VLLYVSNVMMVLTLFVLGGFF) form a helical membrane-spanning segment. Residues 776 to 794 (YCKSSGMDTSNVGWLPLSC) are Extracellular-facing. Residues 795-815 (FVIYILGFSLGFGPIPWLMMG) traverse the membrane as a helical segment. The Cytoplasmic portion of the chain corresponds to 816–821 (EILPAK). Residues 822-842 (IRGSAASVATAFNWSCTFVVT) form a helical membrane-spanning segment. Residues 843–855 (KSFQDMIDFMGAH) are Extracellular-facing. The helical transmembrane segment at 856-876 (GAFWMFGAICFIGLFFVIFYV) threads the bilayer. At 877-911 (PETQGKTLEDIERKMMGRVRRMSSVANIKPLSFNM) the chain is on the cytoplasmic side. A phosphoserine mark is found at serine 899 and serine 900.

It belongs to the major facilitator superfamily. Sugar transporter (TC 2.A.1.1) family. Trehalose transporter subfamily.

Its subcellular location is the cell membrane. In terms of biological role, low-capacity facilitative transporter for trehalose. Does not transport maltose, sucrose or lactose. Mediates the bidirectional transfer of trehalose. Responsible for the transport of trehalose synthesized in the fat body and the incorporation of trehalose into other tissues that require a carbon source, thereby regulating trehalose levels in the hemolymph. The protein is Facilitated trehalose transporter Tret1 of Drosophila virilis (Fruit fly).